Here is a 302-residue protein sequence, read N- to C-terminus: Small ribosomal subunit protein uS3 (302 aa).

The region spanning 17–86 (IDEFFAEELA…DPQIDVQEVE (70 aa)) is the KH type-2 domain. A disordered region spans residues 222-302 (EDADAEDADA…EMDDEDGGAE (81 aa)).

Belongs to the universal ribosomal protein uS3 family. Part of the 30S ribosomal subunit.

In terms of biological role, binds the lower part of the 30S subunit head. The sequence is that of Small ribosomal subunit protein uS3 from Halobacterium salinarum (strain ATCC 700922 / JCM 11081 / NRC-1) (Halobacterium halobium).